Here is a 480-residue protein sequence, read N- to C-terminus: Alpha,alpha-trehalose-phosphate synthase [UDP-forming] 2 (480 aa).

Residues Tyr-97 and Asp-151 each coordinate D-glucose 6-phosphate. The UDP site is built by Arg-288 and Lys-293. Residues Arg-288 and Lys-293 each coordinate UDP-alpha-D-glucose. Arg-326 contacts D-glucose 6-phosphate. 387–395 (DGMNLVSFE) serves as a coordination point for UDP-alpha-D-glucose. 391–395 (LVSFE) lines the UDP pocket.

Belongs to the glycosyltransferase 20 family.

It carries out the reaction D-glucose 6-phosphate + UDP-alpha-D-glucose = alpha,alpha-trehalose 6-phosphate + UDP + H(+). It functions in the pathway carbohydrate biosynthesis. In terms of biological role, synthase catalytic subunit of the trehalose synthase complex that catalyzes the production of trehalose from glucose-6-phosphate and UDP-alpha-D-glucose in a two step process. The sequence is that of Alpha,alpha-trehalose-phosphate synthase [UDP-forming] 2 from Aspergillus niger.